The following is a 470-amino-acid chain: A-type ATP synthase subunit B (470 aa).

The protein belongs to the ATPase alpha/beta chains family. In terms of assembly, has multiple subunits with at least A(3), B(3), C, D, E, F, H, I and proteolipid K(x).

The protein localises to the cell membrane. Component of the A-type ATP synthase that produces ATP from ADP in the presence of a proton gradient across the membrane. The B chain is a regulatory subunit. This Haloarcula marismortui (strain ATCC 43049 / DSM 3752 / JCM 8966 / VKM B-1809) (Halobacterium marismortui) protein is A-type ATP synthase subunit B.